Reading from the N-terminus, the 407-residue chain is Arrestin red cell isoform 1 (407 aa).

The protein belongs to the arrestin family.

It is found in the cytoplasm. The chain is Arrestin red cell isoform 1 from Oncorhynchus mykiss (Rainbow trout).